Reading from the N-terminus, the 379-residue chain is Acyl-CoA dehydrogenase (379 aa).

It belongs to the acyl-CoA dehydrogenase family. FAD is required as a cofactor.

The catalysed reaction is a 2,3-saturated acyl-CoA + A = a 2,3-dehydroacyl-CoA + AH2. In Bacillus subtilis (strain 168), this protein is Acyl-CoA dehydrogenase (mmgC).